The following is a 69-amino-acid chain: MKRLLILIARAWQLGPSRVLPPSCRYSPSCSQYAIEALEKHGAIKGGWLAAKRLLRCHPWGGHGYDPVP.

The protein belongs to the UPF0161 family.

The protein localises to the cell inner membrane. Could be involved in insertion of integral membrane proteins into the membrane. This Novosphingobium aromaticivorans (strain ATCC 700278 / DSM 12444 / CCUG 56034 / CIP 105152 / NBRC 16084 / F199) protein is Putative membrane protein insertion efficiency factor.